The sequence spans 507 residues: Cuticlin-4 (507 aa).

The signal sequence occupies residues 1–19 (MFHFTRILAAFLLPTLCFC). Residues 20–471 (GYSTAPSSTV…KTCFSTSRMY (452 aa)) are Extracellular-facing. One can recognise a ZP domain in the interval 42 to 280 (VCETASISLL…YGCSNTQPQC (239 aa)). The interval 292–350 (KTTETAEPYPYDSHESGYPTRPANYPVASSRYPIPTTQAPASYPSSPAPPPPGADIDNG) is disordered. N-linked (GlcNAc...) asparagine glycosylation is found at Asn-374 and Asn-408. Residues 472-492 (FTLILLCLLFATTVVVFIVIV) form a helical membrane-spanning segment. Residues 493–507 (QKQRQILAQTAFFKP) lie on the Cytoplasmic side of the membrane.

It localises to the cell membrane. In terms of biological role, plays a role in alae formation and subsequent cuticle attachment in adults. The polypeptide is Cuticlin-4 (Caenorhabditis elegans).